A 170-amino-acid polypeptide reads, in one-letter code: Extracellular globin-3 (170 aa).

The signal sequence occupies residues 1–17 (MLRQLLVLVGLAVVCLA). One can recognise a Globin domain in the interval 23-169 (CCSEEDHRIV…ILTKISSRLN (147 aa)). A disulfide bridge links cysteine 24 with cysteine 156. Histidine 119 serves as a coordination point for heme b.

This sequence belongs to the globin family. As to quaternary structure, the extracellular hemoglobin of the earthworm consists of 12 subunits that have a hexagonal bilayer structure with a molecular weight near 3.8 million. Each one-twelfth subunit is composed primarily of disulfide linked trimers (chains A, B, and C) and monomers (chain D).

It localises to the secreted. The protein is Extracellular globin-3 of Lumbricus terrestris (Common earthworm).